A 701-amino-acid polypeptide reads, in one-letter code: ABC transporter G family member 23 (701 aa).

An ABC transporter domain is found at 7-237 (INLNNVSRSY…YECSLLEDVY (231 aa)). 39-46 (GSSGSGKT) lines the ATP pocket. 6 consecutive transmembrane segments (helical) span residues 335–355 (FPLV…FLAI), 493–513 (FLAP…FLSI), 541–561 (HILA…LIAV), 574–596 (LIYL…ISLI), 608–628 (LAIF…EAII), and 665–685 (LIII…STPI). One can recognise an ABC transmembrane type-2 domain in the interval 459–686 (FQKAFNKIAN…SLIVISTPIG (228 aa)).

This sequence belongs to the ABC transporter superfamily. ABCG family.

The protein localises to the membrane. This chain is ABC transporter G family member 23 (abcG23), found in Dictyostelium discoideum (Social amoeba).